A 129-amino-acid chain; its full sequence is Lysozyme C (129 aa).

In terms of domain architecture, C-type lysozyme spans K1 to L129. Intrachain disulfides connect C6-C127, C30-C115, C64-C80, and C76-C94. Residues E35 and D52 contribute to the active site.

This sequence belongs to the glycosyl hydrolase 22 family. In terms of assembly, monomer.

Its subcellular location is the secreted. It catalyses the reaction Hydrolysis of (1-&gt;4)-beta-linkages between N-acetylmuramic acid and N-acetyl-D-glucosamine residues in a peptidoglycan and between N-acetyl-D-glucosamine residues in chitodextrins.. In terms of biological role, lysozymes have primarily a bacteriolytic function; those in tissues and body fluids are associated with the monocyte-macrophage system and enhance the activity of immunoagents. This Callipepla californica (California quail) protein is Lysozyme C (LYZ).